Here is a 360-residue protein sequence, read N- to C-terminus: Protein Wnt-2 (360 aa).

Positions 1–25 are cleaved as a signal peptide; sequence MNAPLGGIWPWLPLLLTWLTPEVSS. 11 cysteine pairs are disulfide-bonded: Cys76-Cys87, Cys127-Cys135, Cys137-Cys157, Cys206-Cys220, Cys208-Cys215, Cys278-Cys309, Cys294-Cys304, Cys308-Cys348, Cys324-Cys339, Cys326-Cys336, and Cys331-Cys332. Residue Ser212 is the site of O-palmitoleoyl serine; by PORCN attachment. Asn295 carries an N-linked (GlcNAc...) asparagine glycan.

Belongs to the Wnt family. Post-translationally, palmitoleoylation is required for efficient binding to frizzled receptors. Depalmitoleoylation leads to Wnt signaling pathway inhibition.

Its subcellular location is the secreted. It localises to the extracellular space. The protein localises to the extracellular matrix. Its function is as follows. Ligand for members of the frizzled family of seven transmembrane receptors. Functions in the canonical Wnt signaling pathway that results in activation of transcription factors of the TCF/LEF family. Functions as a upstream regulator of FGF10 expression. Plays an important role in embryonic lung development. May contribute to embryonic brain development by regulating the proliferation of dopaminergic precursors and neurons. This Felis catus (Cat) protein is Protein Wnt-2 (WNT2).